The chain runs to 269 residues: Shikimate dehydrogenase (NADP(+)) (269 aa).

Residues 17–19 (SKS) and threonine 64 contribute to the shikimate site. Catalysis depends on lysine 68, which acts as the Proton acceptor. Glutamate 80 is a binding site for NADP(+). Asparagine 89 and aspartate 105 together coordinate shikimate. NADP(+)-binding positions include 130–134 (GAGGA), 154–159 (NRTRAK), and methionine 213. Residue tyrosine 215 participates in shikimate binding. Position 237 (glycine 237) interacts with NADP(+).

It belongs to the shikimate dehydrogenase family. Homodimer.

It carries out the reaction shikimate + NADP(+) = 3-dehydroshikimate + NADPH + H(+). The protein operates within metabolic intermediate biosynthesis; chorismate biosynthesis; chorismate from D-erythrose 4-phosphate and phosphoenolpyruvate: step 4/7. In terms of biological role, involved in the biosynthesis of the chorismate, which leads to the biosynthesis of aromatic amino acids. Catalyzes the reversible NADPH linked reduction of 3-dehydroshikimate (DHSA) to yield shikimate (SA). This Neisseria meningitidis serogroup B (strain ATCC BAA-335 / MC58) protein is Shikimate dehydrogenase (NADP(+)).